The chain runs to 622 residues: Iron transport multicopper oxidase FET5 (622 aa).

The N-terminal stretch at 1-18 (MLFYSFVWSVLAASVALA) is a signal peptide. At 19–573 (KTHKLNYTAS…PKGFTTEGYL (555 aa)) the chain is on the extracellular side. Asparagine 24 carries N-linked (GlcNAc...) asparagine glycosylation. Plastocyanin-like domains are found at residues 43–146 (IGFN…FIIH) and 192–301 (NILF…IQMR). Cu cation-binding residues include histidine 79 and histidine 81. Asparagine 86 and asparagine 115 each carry an N-linked (GlcNAc...) asparagine glycan. Cu cation-binding residues include histidine 128 and histidine 130. N-linked (GlcNAc...) asparagine glycosylation is found at asparagine 196, asparagine 200, asparagine 246, asparagine 295, and asparagine 364. In terms of domain architecture, Plastocyanin-like 3 spans 392–514 (GDNINAQLLK…QGLASVFIEA (123 aa)). The Cu cation site is built by histidine 418, histidine 421, and histidine 423. Asparagine 455 carries N-linked (GlcNAc...) asparagine glycosylation. Positions 496, 497, 498, and 502 each coordinate Cu cation. Residues 574 to 594 (ALIISTIIGVWGLYSIAQYGI) traverse the membrane as a helical segment. Residues 595–622 (GEVIPNDEKVYHTLREILAENEIEVSRG) lie on the Cytoplasmic side of the membrane.

The protein belongs to the multicopper oxidase family. Interacts with FTH1. The cofactor is Cu cation.

Its subcellular location is the cell membrane. Its function is as follows. Iron transport multicopper oxidase, which is required for Fe(2+) high affinity uptake. May be required to oxidize Fe(2+) and release it from the transporter. Essential component of copper-dependent iron transport. The chain is Iron transport multicopper oxidase FET5 (FET5) from Saccharomyces cerevisiae (strain ATCC 204508 / S288c) (Baker's yeast).